The chain runs to 87 residues: Putative regulatory protein GK1166 (87 aa).

The protein belongs to the RemA family.

This chain is Putative regulatory protein GK1166, found in Geobacillus kaustophilus (strain HTA426).